The following is a 782-amino-acid chain: DnaJ homolog subfamily C member 16 (782 aa).

The signal sequence occupies residues 1-25; sequence MEVRKLSISWQFLIVLVLILQILSA. Topologically, residues 26–535 are cytoplasmic; the sequence is LDFDPYRVLG…DSIFHNNWRE (510 aa). A J domain is found at 29-93; that stretch reads DPYRVLGVSR…EKRSNYDQYG (65 aa). A Thioredoxin domain is found at 119 to 247; that stretch reads FYFDESFFHF…LRQFVESLLP (129 aa). The chain crosses the membrane as a helical; Anchor for type IV membrane protein span at residues 536–556; it reads MMPLLSLIFSALFILFGTVIV. Topologically, residues 557-782 are extracellular; sequence QAFSDSNDER…FYIPSWPELD (226 aa). A disordered region spans residues 562–593; the sequence is SNDERESSPPEKEEAQEKTGKTEPSFTKENSS. Residues 563 to 582 show a composition bias toward basic and acidic residues; sequence NDERESSPPEKEEAQEKTGK. The segment covering 583–593 has biased composition (polar residues); that stretch reads TEPSFTKENSS. Residue Asn631 is glycosylated (N-linked (GlcNAc...) asparagine).

It is found in the endoplasmic reticulum membrane. In terms of biological role, plays an important role in regulating the size of autophagosomes during the formation process. The polypeptide is DnaJ homolog subfamily C member 16 (DNAJC16) (Homo sapiens (Human)).